The chain runs to 347 residues: Anthranilate phosphoribosyltransferase (347 aa).

5-phospho-alpha-D-ribose 1-diphosphate is bound by residues glycine 82, 85–86 (GD), threonine 90, 92–95 (NIST), 110–118 (KHGNRAITS), and threonine 122. Glycine 82 lines the anthranilate pocket. A Mg(2+)-binding site is contributed by serine 94. Asparagine 113 is an anthranilate binding site. Residue arginine 168 participates in anthranilate binding. Mg(2+) is bound by residues aspartate 226 and glutamate 227.

It belongs to the anthranilate phosphoribosyltransferase family. Homodimer. Mg(2+) serves as cofactor.

It carries out the reaction N-(5-phospho-beta-D-ribosyl)anthranilate + diphosphate = 5-phospho-alpha-D-ribose 1-diphosphate + anthranilate. The protein operates within amino-acid biosynthesis; L-tryptophan biosynthesis; L-tryptophan from chorismate: step 2/5. In terms of biological role, catalyzes the transfer of the phosphoribosyl group of 5-phosphorylribose-1-pyrophosphate (PRPP) to anthranilate to yield N-(5'-phosphoribosyl)-anthranilate (PRA). The sequence is that of Anthranilate phosphoribosyltransferase from Caulobacter sp. (strain K31).